We begin with the raw amino-acid sequence, 149 residues long: Large ribosomal subunit protein bL20m (149 aa).

The N-terminal 9 residues, 1–9, are a transit peptide targeting the mitochondrion; it reads MVFLSAPLW.

This sequence belongs to the bacterial ribosomal protein bL20 family. Component of the mitochondrial ribosome large subunit (39S) which comprises a 16S rRNA and about 50 distinct proteins. Interacts with OXA1L.

The protein localises to the mitochondrion. The protein is Large ribosomal subunit protein bL20m (MRPL20) of Bos taurus (Bovine).